The sequence spans 383 residues: Protein COS5 (383 aa).

Over 1-42 (MKENELKNEKSVDVLSFKQLESQKIVLPQDLFRSSFTWFCYE) the chain is Cytoplasmic. A helical transmembrane segment spans residues 43-63 (IYKSLAFPIWMLLWLPLSVWW). Over 64-72 (KLSNNCIYP) the chain is Extracellular. A helical membrane pass occupies residues 73–93 (LIVSLLVLFLGPIFVLVICGL). Topologically, residues 94–232 (SRKRSLSKQL…RSKLTWFLKR (139 aa)) are cytoplasmic. Residues 233–253 (IFTIYSLPLWLAFLNCICVSQ) form a helical membrane-spanning segment. Residue His254 is a topological domain, extracellular. Residues 255–275 (FCLAFRILCPGLFFLMMVWLF) traverse the membrane as a helical segment. Topologically, residues 276–383 (QNMRTTALLV…SRNEESLMKK (108 aa)) are cytoplasmic.

This sequence belongs to the DUP/COS family.

It localises to the membrane. In Saccharomyces cerevisiae (strain ATCC 204508 / S288c) (Baker's yeast), this protein is Protein COS5 (COS5).